Reading from the N-terminus, the 608-residue chain is UvrABC system protein C (608 aa).

Positions 13 to 91 constitute a GIY-YIG domain; that stretch reads HDAGVYRMYD…IKTYQPRYNV (79 aa). The region spanning 201-236 is the UVR domain; it reads QQVLEHLIHKMEQASLALDFEEAARIRDQIQAVRAV.

It belongs to the UvrC family. As to quaternary structure, interacts with UvrB in an incision complex.

It is found in the cytoplasm. Its function is as follows. The UvrABC repair system catalyzes the recognition and processing of DNA lesions. UvrC both incises the 5' and 3' sides of the lesion. The N-terminal half is responsible for the 3' incision and the C-terminal half is responsible for the 5' incision. In Pasteurella multocida (strain Pm70), this protein is UvrABC system protein C.